An 821-amino-acid polypeptide reads, in one-letter code: MEMPGRRSNYTLLSQFSDDQVSVSVTGAPPPHYDSLSSENRSNHNSGNTGKAKAERGGFDWDPSGGGGGDHRLNNQPNRVGNNMYASSLGLQRQSSGSSFGESSLSGDYYMPTLSAAANEIESVGFPQDDGFRLGFGGGGGDLRIQMAADSAGGSSSGKSWAQQTEESYQLQLALALRLSSEATCADDPNFLDPVPDESALRTSPSSAETVSHRFWVNGCLSYYDKVPDGFYMMNGLDPYIWTLCIDLHESGRIPSIESLRAVDSGVDSSLEAIIVDRRSDPAFKELHNRVHDISCSCITTKEVVDQLAKLICNRMGGPVIMGEDELVPMWKECIDGLKEIFKVVVPIGSLSVGLCRHRALLFKVLADIIDLPCRIAKGCKYCNRDDAASCLVRFGLDREYLVDLVGKPGHLWEPDSLLNGPSSISISSPLRFPRPKPVEPAVDFRLLAKQYFSDSQSLNLVFDPASDDMGFSMFHRQYDNPGGENDALAENGGGSLPPSANMPPQNMMRASNQIEAAPMNAPPISQPVPNRANRELGLDGDDMDIPWCDLNIKEKIGAGSFGTVHRAEWHGSDVAVKILMEQDFHAERVNEFLREVAIMKRLRHPNIVLFMGAVTQPPNLSIVTEYLSRGSLYRLLHKSGAREQLDERRRLSMAYDVAKGMNYLHNRNPPIVHRDLKSPNLLVDKKYTVKVCDFGLSRLKASTFLSSKSAAGTPEWMAPEVLRDEPSNEKSDVYSFGVILWELATLQQPWGNLNPAQVVAAVGFKCKRLEIPRNLNPQVAAIIEGCWTNEPWKRPSFATIMDLLRPLIKSAVPPPNRSDL.

Disordered stretches follow at residues 1–76 (MEMP…LNNQ) and 481–502 (NPGGENDALAENGGGSLPPSAN). Positions 14–25 (SQFSDDQVSVSV) are enriched in low complexity. Residues 35-49 (SLSSENRSNHNSGNT) are compositionally biased toward polar residues. Residues 551–809 (LNIKEKIGAG…TIMDLLRPLI (259 aa)) form the Protein kinase domain. Residues 557–565 (IGAGSFGTV) and lysine 578 contribute to the ATP site. Residue aspartate 676 is the Proton acceptor of the active site.

The protein belongs to the protein kinase superfamily. TKL Ser/Thr protein kinase family. RAF subfamily. As to quaternary structure, interacts with EIN2 (via C-terminus). As to expression, expressed in both seedlings and adult plants.

It carries out the reaction L-seryl-[protein] + ATP = O-phospho-L-seryl-[protein] + ADP + H(+). The enzyme catalyses L-threonyl-[protein] + ATP = O-phospho-L-threonyl-[protein] + ADP + H(+). Kinase activity is inhibited by C24:1-ceramide during hypoxia (e.g. submergences). Acts as a negative regulator in the ethylene response pathway. Phosphorylates the cytosolic C-terminal domain of EIN2, preventing the signaling in the absence of ethylene. Interacts with C24:1-ceramide upon hypoxic conditions (e.g. submergences) to in turn regulate EIN2 endoplasmic reticulum (ER)-to-nucleus translocation and EIN3 stabilization. This is Serine/threonine-protein kinase CTR1 from Arabidopsis thaliana (Mouse-ear cress).